The sequence spans 299 residues: Zinc finger protein-like 1 homolog (299 aa).

The segment at 1-43 (MGLCKCPKRLVTNQFCFEHRVNVCEHCMVQSHPKCIVQSYLQW) adopts a B box-type; degenerate zinc-finger fold. An RING-type; atypical zinc finger spans residues 53-101 (CTLCGTTLEQGDCVRLVCYHVFHWDCLNARQAALPANTAPRGHQCPACS). The tract at residues 200-231 (AGDYASSRRPLLPRQSPIGGTDRDDNKYQRRT) is disordered. Ser-215 carries the phosphoserine modification. A helical membrane pass occupies residues 256–276 (WFLVTAGILAFVLFVYLMAWL).

Belongs to the ZFPL1 family.

The protein localises to the membrane. The chain is Zinc finger protein-like 1 homolog from Drosophila melanogaster (Fruit fly).